Consider the following 128-residue polypeptide: Small ribosomal subunit protein eS8 (128 aa).

The protein belongs to the eukaryotic ribosomal protein eS8 family. Part of the 30S ribosomal subunit.

The sequence is that of Small ribosomal subunit protein eS8 from Methanococcus aeolicus (strain ATCC BAA-1280 / DSM 17508 / OCM 812 / Nankai-3).